Reading from the N-terminus, the 490-residue chain is Sushi domain-containing protein 4 (490 aa).

The interval 1–20 (MYHGMNPSNGDGFLEQQLQQ) is disordered. Positions 1 to 41 (MYHGMNPSNGDGFLEQQLQQQQPQSPQRLLAVILWFQLALC) are cleaved as a signal peptide. Residues 42–319 (FGPAQLTGGF…PSTHETLLTT (278 aa)) lie on the Extracellular side of the membrane. Sushi domains are found at residues 55–119 (NVCA…VCIQ), 120–179 (EDCR…ICQG), 178–239 (QGCL…RCLA), and 241–304 (EVCP…YCIK). 8 cysteine pairs are disulfide-bonded: Cys-57–Cys-99, Cys-85–Cys-117, Cys-122–Cys-165, Cys-147–Cys-177, Cys-180–Cys-224, Cys-210–Cys-237, Cys-243–Cys-289, and Cys-274–Cys-302. Residues Asn-104 and Asn-134 are each glycosylated (N-linked (GlcNAc...) asparagine). The N-linked (GlcNAc...) asparagine glycan is linked to Asn-192. A helical transmembrane segment spans residues 320–340 (WKIVAFTATSVLLVLLLVILA). The Cytoplasmic portion of the chain corresponds to 341–490 (RMFQTKFKAH…DEIPLMEEDP (150 aa)). The tract at residues 394–490 (YPASVGQGCP…DEIPLMEEDP (97 aa)) is disordered. 2 stretches are compositionally biased toward polar residues: residues 430 to 444 (CDST…QSLY) and 461 to 475 (DTIS…STSP). Residues 479 to 490 (IADEIPLMEEDP) show a composition bias toward acidic residues.

High expression in brain and eye, with weaker expression in spinal cord and testis. Detected in white matter of brain and in the outer segments of photoreceptors.

It is found in the membrane. Its function is as follows. Acts as a complement inhibitor by disrupting the formation of the classical C3 convertase. Isoform 3 inhibits the classical complement pathway, while membrane-bound isoform 1 inhibits deposition of C3b via both the classical and alternative complement pathways. This is Sushi domain-containing protein 4 (Susd4) from Mus musculus (Mouse).